Consider the following 265-residue polypeptide: Undecaprenyl-diphosphatase (265 aa).

The next 7 membrane-spanning stretches (helical) occupy residues 38-58, 80-100, 107-127, 135-155, 178-198, 216-236, and 244-264; these read SDMFNIVIQAGAILAVTIIYW, LIVAFLITAILGLVVKKLGFE, PIAWALIIGGIWMIFAEWAAA, ITWLVAILVGIAQIVAGVFPG, TEFAFLVGIPTMYAASAYELL, IAFVVSTVVAFIAVKWLLAYI, and FAIYRIILGVLLLGMAATGLI.

This sequence belongs to the UppP family.

The protein localises to the cell inner membrane. It catalyses the reaction di-trans,octa-cis-undecaprenyl diphosphate + H2O = di-trans,octa-cis-undecaprenyl phosphate + phosphate + H(+). In terms of biological role, catalyzes the dephosphorylation of undecaprenyl diphosphate (UPP). Confers resistance to bacitracin. The polypeptide is Undecaprenyl-diphosphatase (Rhizobium johnstonii (strain DSM 114642 / LMG 32736 / 3841) (Rhizobium leguminosarum bv. viciae)).